A 267-amino-acid chain; its full sequence is Fibroin light chain (267 aa).

The N-terminal stretch at 1–16 is a signal peptide; it reads MLPFVLVLLVATSALA. At Ser-19 the chain carries N-acetylserine; in short form. Cys-103 and Cys-162 are joined by a disulfide.

As to quaternary structure, silk fibroin elementary unit consists in a disulfide-linked heavy and light chain and a p25 glycoprotein in molar ratios of 6:6:1. This results in a complex of approximately 2.3 MDa. Partially N-terminally processed to yield a short form which lacks the first two residues of the long form. Post-translationally, the interchain disulfide bridge is essential for the intracellular transport and secretion of fibroin. As to expression, produced exclusively in the posterior (PSG) section of silk glands, which are essentially modified salivary glands.

The protein localises to the secreted. Functionally, it is likely that the major role of L-chain is to prevent the retention of H-chain in ER by forming the disulfide linkage. This chain is Fibroin light chain (FIBL), found in Galleria mellonella (Greater wax moth).